Here is a 609-residue protein sequence, read N- to C-terminus: Glutamine--fructose-6-phosphate aminotransferase [isomerizing] (609 aa).

Cys-2 (nucleophile; for GATase activity) is an active-site residue. Positions 2–218 (CGIVGAIAQR…EGDIAEITRR (217 aa)) constitute a Glutamine amidotransferase type-2 domain. 2 SIS domains span residues 286 to 426 (ADEL…LKGL) and 458 to 599 (LAED…VDQP). Lys-604 (for Fru-6P isomerization activity) is an active-site residue.

As to quaternary structure, homodimer.

It is found in the cytoplasm. The catalysed reaction is D-fructose 6-phosphate + L-glutamine = D-glucosamine 6-phosphate + L-glutamate. Its function is as follows. Catalyzes the first step in hexosamine metabolism, converting fructose-6P into glucosamine-6P using glutamine as a nitrogen source. In Escherichia coli O6:H1 (strain CFT073 / ATCC 700928 / UPEC), this protein is Glutamine--fructose-6-phosphate aminotransferase [isomerizing].